Consider the following 436-residue polypeptide: tRNA(Ile)-lysidine synthase (436 aa).

Residue Ser21 to Ser26 participates in ATP binding.

Belongs to the tRNA(Ile)-lysidine synthase family.

It localises to the cytoplasm. The catalysed reaction is cytidine(34) in tRNA(Ile2) + L-lysine + ATP = lysidine(34) in tRNA(Ile2) + AMP + diphosphate + H(+). In terms of biological role, ligates lysine onto the cytidine present at position 34 of the AUA codon-specific tRNA(Ile) that contains the anticodon CAU, in an ATP-dependent manner. Cytidine is converted to lysidine, thus changing the amino acid specificity of the tRNA from methionine to isoleucine. The chain is tRNA(Ile)-lysidine synthase from Aster yellows witches'-broom phytoplasma (strain AYWB).